Here is a 584-residue protein sequence, read N- to C-terminus: Arginine--tRNA ligase (584 aa).

The 'HIGH' region motif lies at 126–136 (PNIAKEMHVGH).

It belongs to the class-I aminoacyl-tRNA synthetase family. In terms of assembly, monomer.

The protein localises to the cytoplasm. The enzyme catalyses tRNA(Arg) + L-arginine + ATP = L-arginyl-tRNA(Arg) + AMP + diphosphate. This chain is Arginine--tRNA ligase, found in Synechococcus elongatus (strain ATCC 33912 / PCC 7942 / FACHB-805) (Anacystis nidulans R2).